Consider the following 304-residue polypeptide: MVERKPVFVDWCPGCGDFGILRAEEMAIRELGINPKSVVIVSGIGCSGKIPHFMNLPISGVHTLHGRSIAFATGIKLSNPSLEVIVNVGDGDGLGIGMGHFVHLGRRNIDIAVLVHNNGVYGLTKGQASPTLHRGEKTKSLPKPNIMDAVNPLAVALAAGYTFVARGYAYDVMHLKELIKKAILHKGSALVDILQPCPTYNDINTKEWYDKRVYKLDNVPGWDPVVRKEEEAQKKFEQAIMKSYEWGEKIPIGIFYQNELVPTFEDRLTSNIPNYREYYPAKQQIEINGISTTKIDELIKAKRI.

Cys12, Cys15, and Cys46 together coordinate [4Fe-4S] cluster. Thiamine diphosphate is bound by residues 44–47 (IGCS) and His65. Residue Asp90 participates in Mg(2+) binding. 91 to 92 (GD) contributes to the thiamine diphosphate binding site. Positions 118 and 120 each coordinate Mg(2+). Thiamine diphosphate is bound at residue 122 to 123 (GL). Cys197 lines the [4Fe-4S] cluster pocket.

In terms of assembly, heterodimer composed of an alpha and a beta subunit. [4Fe-4S] cluster is required as a cofactor. The cofactor is thiamine diphosphate. It depends on Mg(2+) as a cofactor.

The enzyme catalyses a 2-oxocarboxylate + 2 oxidized [2Fe-2S]-[ferredoxin] + CoA = an acyl-CoA + 2 reduced [2Fe-2S]-[ferredoxin] + CO2 + H(+). Its function is as follows. Catalyzes the coenzyme A-dependent oxidative decarboxylation of different 2-oxoacids such as 2-oxoglutarate, pyruvate and 2-oxobutyrate to form their CoA derivatives. The sequence is that of 2-oxoacid:ferredoxin oxidoreductase 2, subunit beta from Sulfurisphaera tokodaii (strain DSM 16993 / JCM 10545 / NBRC 100140 / 7) (Sulfolobus tokodaii).